We begin with the raw amino-acid sequence, 246 residues long: Orotidine 5'-phosphate decarboxylase (246 aa).

Residues Asp22, Lys44, 71–80, Thr130, Arg191, Gln201, Gly221, and Arg222 each bind substrate; that span reads DLKYHDIPHT. Lys73 functions as the Proton donor in the catalytic mechanism.

Belongs to the OMP decarboxylase family. Type 1 subfamily. In terms of assembly, homodimer.

It catalyses the reaction orotidine 5'-phosphate + H(+) = UMP + CO2. It functions in the pathway pyrimidine metabolism; UMP biosynthesis via de novo pathway; UMP from orotate: step 2/2. Its function is as follows. Catalyzes the decarboxylation of orotidine 5'-monophosphate (OMP) to uridine 5'-monophosphate (UMP). The chain is Orotidine 5'-phosphate decarboxylase from Neisseria meningitidis serogroup C (strain 053442).